The following is a 124-amino-acid chain: Kinocilin (124 aa).

Helical transmembrane passes span 13-33 (LQLA…GVSV) and 40-60 (VGGI…YPFL). Residues 80 to 124 (PNSGPDHGEGRSSNNSNKEGARSGLSTVTRTLEKLKPGGRGTEEG) are disordered. The segment covering 90 to 109 (RSSNNSNKEGARSGLSTVTR) has biased composition (polar residues). The segment covering 110-124 (TLEKLKPGGRGTEEG) has biased composition (basic and acidic residues).

As to expression, preferentially expressed in the inner ear and testis. Localizes mainly in the kinocilium of sensory cells in the inner ear. Also present in the manchette of the spermatids, a transient structure enriched in interconnected microtubules (at protein level).

The protein resides in the membrane. Its function is as follows. May play a role in stabilizing dense microtubular networks or in vesicular trafficking. This is Kinocilin (Kncn) from Mus musculus (Mouse).